Reading from the N-terminus, the 420-residue chain is L-cysteine:1D-myo-inositol 2-amino-2-deoxy-alpha-D-glucopyranoside ligase (420 aa).

Cys-46 contributes to the Zn(2+) binding site. Residues 46 to 49 (CGIT), Thr-61, and 84 to 86 (NVT) each bind L-cysteinyl-5'-AMP. Residues 48–58 (ITPYDSTHLGH) carry the 'HIGH' region motif. A 'ERGGDP' region motif is present at residues 194-199 (ERGGDP). Position 235 (Trp-235) interacts with L-cysteinyl-5'-AMP. Residue Cys-239 participates in Zn(2+) binding. 257–259 (GTD) serves as a coordination point for L-cysteinyl-5'-AMP. Zn(2+) is bound at residue His-264. L-cysteinyl-5'-AMP is bound at residue Val-291. The 'KMSKS' region motif lies at 297–301 (KMSKS).

The protein belongs to the class-I aminoacyl-tRNA synthetase family. MshC subfamily. Monomer. It depends on Zn(2+) as a cofactor.

The catalysed reaction is 1D-myo-inositol 2-amino-2-deoxy-alpha-D-glucopyranoside + L-cysteine + ATP = 1D-myo-inositol 2-(L-cysteinylamino)-2-deoxy-alpha-D-glucopyranoside + AMP + diphosphate + H(+). Its function is as follows. Catalyzes the ATP-dependent condensation of GlcN-Ins and L-cysteine to form L-Cys-GlcN-Ins. The sequence is that of L-cysteine:1D-myo-inositol 2-amino-2-deoxy-alpha-D-glucopyranoside ligase from Beutenbergia cavernae (strain ATCC BAA-8 / DSM 12333 / CCUG 43141 / JCM 11478 / NBRC 16432 / NCIMB 13614 / HKI 0122).